Here is a 358-residue protein sequence, read N- to C-terminus: CD209 antigen (358 aa).

Residues 1–37 lie on the Cytoplasmic side of the membrane; that stretch reads MSDSKEPRLQQLGLLEEEQLRGVGFRQTRGYKSLAGC. Short sequence motifs (endocytosis signal) lie at residues 14 to 15, 16 to 18, and 31 to 34; these read LL, EEE, and YKSL. A helical; Signal-anchor for type II membrane protein transmembrane segment spans residues 38–58; it reads LGHGPLVLQLLSFTLLAGLLV. Over 59–358 the chain is Extracellular; that stretch reads QVSKVPSSLS…APTTPNPPPE (300 aa). Asparagine 80 carries an N-linked (GlcNAc...) asparagine glycan. 5 consecutive repeat copies span residues 96–118, 119–141, 142–164, 165–187, and 188–211. A 5 X approximate tandem repeats region spans residues 96–280; sequence KLQEIYQELT…GLSDLNHEGT (185 aa). Cystine bridges form between cysteine 210-cysteine 221, cysteine 238-cysteine 331, and cysteine 310-cysteine 323. The C-type lectin domain maps to 217-332; sequence FQGNCYFMSN…CNLAKFWICK (116 aa). Residues glutamate 301, asparagine 303, isoleucine 305, glutamate 308, asparagine 319, and aspartate 320 each coordinate Ca(2+). Residues 336–358 are disordered; that stretch reads ASCSGDEERLLSPAPTTPNPPPE.

As to quaternary structure, homotetramer. Interacts with C1QBP; the interaction is indicative for a C1q:C1QBP:CD209 signaling complex. Interacts with ICAM2 and ICAM3 by binding to mannose-like carbohydrates. Interacts (via C-type lectin domain) with CEACAM1 (via Lewis X moieties); this interaction is regulated by the glycosylation pattern of CEACAM1 on cell types and regulates contact between dendritic cells and neutrophils.

It localises to the membrane. Its function is as follows. Pathogen-recognition receptor expressed on the surface of immature dendritic cells (DCs) and involved in initiation of primary immune response. Thought to mediate the endocytosis of pathogens which are subsequently degraded in lysosomal compartments. The receptor returns to the cell membrane surface and the pathogen-derived antigens are presented to resting T-cells via MHC class II proteins to initiate the adaptive immune response. Probably recognizes in a calcium-dependent manner high mannose N-linked oligosaccharides in a variety of pathogen antigens. In terms of biological role, on DCs it is a high affinity receptor for ICAM2 and ICAM3 by binding to mannose-like carbohydrates. May act as a DC rolling receptor that mediates transendothelial migration of DC presursors from blood to tissues by binding endothelial ICAM2. Seems to regulate DC-induced T-cell proliferation by binding to ICAM3 on T-cells in the immunological synapse formed between DC and T-cells. This Papio hamadryas (Hamadryas baboon) protein is CD209 antigen (CD209).